Here is a 900-residue protein sequence, read N- to C-terminus: 3'-5' exonuclease DinG (900 aa).

Residues 8-161 (VVDLETTGNQ…DEDAATTAQL (154 aa)) enclose the Exonuclease domain. Positions 241 to 496 (TLVTKELGLT…KSIDLLEQQR (256 aa)) constitute a Helicase ATP-binding domain. Residue 276-283 (APLGSGKS) coordinates ATP. The short motif at 448–451 (DEAH) is the DEAH box element. Residues 714-883 (YVIEYVSVVE…RYRQKKGDIK (170 aa)) form the Helicase C-terminal domain.

It belongs to the helicase family. DinG subfamily. Type 2 sub-subfamily.

In terms of biological role, 3'-5' exonuclease. This is 3'-5' exonuclease DinG from Staphylococcus saprophyticus subsp. saprophyticus (strain ATCC 15305 / DSM 20229 / NCIMB 8711 / NCTC 7292 / S-41).